A 303-amino-acid chain; its full sequence is Probable 5-dehydro-4-deoxyglucarate dehydratase (303 aa).

Belongs to the DapA family.

The enzyme catalyses 5-dehydro-4-deoxy-D-glucarate + H(+) = 2,5-dioxopentanoate + CO2 + H2O. Its pathway is carbohydrate acid metabolism; D-glucarate degradation; 2,5-dioxopentanoate from D-glucarate: step 2/2. In Pseudomonas fluorescens (strain Pf0-1), this protein is Probable 5-dehydro-4-deoxyglucarate dehydratase.